A 330-amino-acid chain; its full sequence is Type II methyltransferase M.HaeIII (330 aa).

Residues 1-327 (MNLISLFSGA…KTIKSALEIC (327 aa)) enclose the SAM-dependent MTase C5-type domain. ATP-binding positions include Glu-29 and 50 to 51 (DI). Cys-71 is an active-site residue. Residue Asn-260 participates in ATP binding.

Belongs to the class I-like SAM-binding methyltransferase superfamily. C5-methyltransferase family. As to quaternary structure, monomer.

The enzyme catalyses a 2'-deoxycytidine in DNA + S-adenosyl-L-methionine = a 5-methyl-2'-deoxycytidine in DNA + S-adenosyl-L-homocysteine + H(+). In terms of biological role, a methylase, recognizes the double-stranded sequence 5'-GGCC-3', methylates C-3 on both strands, and protects the DNA from cleavage by the HaeIII endonuclease. The protein is Type II methyltransferase M.HaeIII (haeIIIM) of Haemophilus aegyptius.